The chain runs to 608 residues: ESX-3 secretion system protein EccA3 (608 aa).

Residues 284-303 are disordered; sequence EARSDPWDPETEPSEAEFVD. Residues 290 to 301 are compositionally biased toward acidic residues; sequence WDPETEPSEAEF. 365-372 serves as a coordination point for ATP; the sequence is GPPGTGKT.

The protein belongs to the CbxX/CfxQ family. In terms of assembly, part of the ESX-3 / type VII secretion system (T7SS), which is composed of cytosolic and membrane components.

It localises to the cytoplasm. In terms of biological role, part of the ESX-3 specialized secretion system, which is required for siderophore-mediated iron acquisition and for the secretion of EsxH and EsxG. EccA3 exhibits ATPase activity and may provide energy for the export of ESX-3 substrates. The protein is ESX-3 secretion system protein EccA3 of Mycolicibacterium smegmatis (strain ATCC 700084 / mc(2)155) (Mycobacterium smegmatis).